The following is a 309-amino-acid chain: Methionyl-tRNA formyltransferase (309 aa).

109-112 (SLLP) contributes to the (6S)-5,6,7,8-tetrahydrofolate binding site.

Belongs to the Fmt family.

The enzyme catalyses L-methionyl-tRNA(fMet) + (6R)-10-formyltetrahydrofolate = N-formyl-L-methionyl-tRNA(fMet) + (6S)-5,6,7,8-tetrahydrofolate + H(+). Functionally, attaches a formyl group to the free amino group of methionyl-tRNA(fMet). The formyl group appears to play a dual role in the initiator identity of N-formylmethionyl-tRNA by promoting its recognition by IF2 and preventing the misappropriation of this tRNA by the elongation apparatus. This Clostridioides difficile (strain 630) (Peptoclostridium difficile) protein is Methionyl-tRNA formyltransferase.